Consider the following 140-residue polypeptide: UPF0299 membrane protein CGSHiGG_01475 (140 aa).

4 helical membrane passes run 1-21 (MIQK…MLYL), 33-52 (VPGS…TRVI), 60-80 (GASL…VGII), and 92-112 (ILLV…GFLG).

This sequence belongs to the UPF0299 family.

The protein resides in the cell inner membrane. This chain is UPF0299 membrane protein CGSHiGG_01475, found in Haemophilus influenzae (strain PittGG).